Here is a 407-residue protein sequence, read N- to C-terminus: B3 domain-containing protein Os07g0183200 (407 aa).

The TF-B3 DNA-binding region spans 124-227; the sequence is FVKTLMISDF…ELYVGVRRQR (104 aa).

It is found in the nucleus. This is B3 domain-containing protein Os07g0183200 from Oryza sativa subsp. japonica (Rice).